We begin with the raw amino-acid sequence, 224 residues long: Flagellar L-ring protein (224 aa).

The signal sequence occupies residues 1 to 15 (MIKYIALASVVLLVG). A lipid anchor (N-palmitoyl cysteine) is attached at Cys-16. The S-diacylglycerol cysteine moiety is linked to residue Cys-16.

The protein belongs to the FlgH family. The basal body constitutes a major portion of the flagellar organelle and consists of four rings (L,P,S, and M) mounted on a central rod.

The protein localises to the cell outer membrane. Its subcellular location is the bacterial flagellum basal body. Assembles around the rod to form the L-ring and probably protects the motor/basal body from shearing forces during rotation. This Shewanella frigidimarina (strain NCIMB 400) protein is Flagellar L-ring protein.